The following is a 1136-amino-acid chain: Probable RNA-dependent RNA polymerase 2 (1136 aa).

Positions 965–989 (SGDSGALSSSSAQPSPTYDPDLEVP) are disordered. A compositionally biased stretch (low complexity) spans 967–980 (DSGALSSSSAQPSP).

It belongs to the RdRP family.

The catalysed reaction is RNA(n) + a ribonucleoside 5'-triphosphate = RNA(n+1) + diphosphate. In terms of biological role, probably involved in the RNA silencing pathway and required for the generation of small interfering RNAs (siRNAs). The chain is Probable RNA-dependent RNA polymerase 2 (RDR2) from Oryza sativa subsp. japonica (Rice).